The primary structure comprises 298 residues: Zinc import ATP-binding protein ZnuC (298 aa).

Residues 17–232 (IELRNAGVYR…PEYVRLFGSR (216 aa)) form the ABC transporter domain. 49–56 (GQNGAGKS) provides a ligand contact to ATP. Residues 273–298 (RGHCHVEDGHHHDHEHHHHEGGQPRA) are disordered. Over residues 276–298 (CHVEDGHHHDHEHHHHEGGQPRA) the composition is skewed to basic and acidic residues.

It belongs to the ABC transporter superfamily. Zinc importer (TC 3.A.1.15.5) family. In terms of assembly, the complex is composed of two ATP-binding proteins (ZnuC), two transmembrane proteins (ZnuB) and a solute-binding protein (ZnuA).

It localises to the cell inner membrane. The enzyme catalyses Zn(2+)(out) + ATP(in) + H2O(in) = Zn(2+)(in) + ADP(in) + phosphate(in) + H(+)(in). Its function is as follows. Part of the ABC transporter complex ZnuABC involved in zinc import. Responsible for energy coupling to the transport system. This chain is Zinc import ATP-binding protein ZnuC, found in Brucella melitensis biotype 1 (strain ATCC 23456 / CCUG 17765 / NCTC 10094 / 16M).